The following is a 109-amino-acid chain: MEVSAILRGTRLSAQKGRLVADQIRGLRVEKALNILAFSPKKGAGIIKKVLESAIANAEHNEGADIDALKVKTIYVDQGSVLKRFTARAKGRGNRISKPTCHITVTVGD.

It belongs to the universal ribosomal protein uL22 family. Part of the 50S ribosomal subunit.

Functionally, this protein binds specifically to 23S rRNA; its binding is stimulated by other ribosomal proteins, e.g. L4, L17, and L20. It is important during the early stages of 50S assembly. It makes multiple contacts with different domains of the 23S rRNA in the assembled 50S subunit and ribosome. In terms of biological role, the globular domain of the protein is located near the polypeptide exit tunnel on the outside of the subunit, while an extended beta-hairpin is found that lines the wall of the exit tunnel in the center of the 70S ribosome. The polypeptide is Large ribosomal subunit protein uL22 (Thiobacillus denitrificans (strain ATCC 25259 / T1)).